Consider the following 158-residue polypeptide: Protein-export protein SecB (158 aa).

Belongs to the SecB family. As to quaternary structure, homotetramer, a dimer of dimers. One homotetramer interacts with 1 SecA dimer.

It localises to the cytoplasm. Functionally, one of the proteins required for the normal export of preproteins out of the cell cytoplasm. It is a molecular chaperone that binds to a subset of precursor proteins, maintaining them in a translocation-competent state. It also specifically binds to its receptor SecA. The polypeptide is Protein-export protein SecB (Yersinia pestis (strain Pestoides F)).